Consider the following 537-residue polypeptide: CTP synthase (537 aa).

The amidoligase domain stretch occupies residues 1–267; it reads MTKYIFVTGG…DQIVLDHFDV (267 aa). Residue serine 13 coordinates CTP. Serine 13 serves as a coordination point for UTP. 14 to 19 contributes to the ATP binding site; that stretch reads SIGKGI. Residue tyrosine 54 participates in L-glutamine binding. Position 71 (aspartate 71) interacts with ATP. Mg(2+) contacts are provided by aspartate 71 and glutamate 141. Residues 148-150, 188-193, and lysine 224 contribute to the CTP site; these read DIE and KTKPTQ. Residues 188–193 and lysine 224 each bind UTP; that span reads KTKPTQ. One can recognise a Glutamine amidotransferase type-1 domain in the interval 292–535; the sequence is KIALVGKYVA…IDAANQTGKV (244 aa). Glycine 354 contacts L-glutamine. Cysteine 381 (nucleophile; for glutamine hydrolysis) is an active-site residue. Residues 382–385, glutamate 405, and arginine 463 contribute to the L-glutamine site; that span reads LGMQ. Catalysis depends on residues histidine 508 and glutamate 510.

Belongs to the CTP synthase family. In terms of assembly, homotetramer.

It carries out the reaction UTP + L-glutamine + ATP + H2O = CTP + L-glutamate + ADP + phosphate + 2 H(+). The catalysed reaction is L-glutamine + H2O = L-glutamate + NH4(+). The enzyme catalyses UTP + NH4(+) + ATP = CTP + ADP + phosphate + 2 H(+). Its pathway is pyrimidine metabolism; CTP biosynthesis via de novo pathway; CTP from UDP: step 2/2. With respect to regulation, allosterically activated by GTP, when glutamine is the substrate; GTP has no effect on the reaction when ammonia is the substrate. The allosteric effector GTP functions by stabilizing the protein conformation that binds the tetrahedral intermediate(s) formed during glutamine hydrolysis. Inhibited by the product CTP, via allosteric rather than competitive inhibition. Its function is as follows. Catalyzes the ATP-dependent amination of UTP to CTP with either L-glutamine or ammonia as the source of nitrogen. Regulates intracellular CTP levels through interactions with the four ribonucleotide triphosphates. This is CTP synthase from Lactiplantibacillus plantarum (strain ATCC BAA-793 / NCIMB 8826 / WCFS1) (Lactobacillus plantarum).